A 123-amino-acid polypeptide reads, in one-letter code: Large ribosomal subunit protein bL12 (123 aa).

It belongs to the bacterial ribosomal protein bL12 family. Homodimer. Part of the ribosomal stalk of the 50S ribosomal subunit. Forms a multimeric L10(L12)X complex, where L10 forms an elongated spine to which 2 to 4 L12 dimers bind in a sequential fashion. Binds GTP-bound translation factors.

Its function is as follows. Forms part of the ribosomal stalk which helps the ribosome interact with GTP-bound translation factors. Is thus essential for accurate translation. This is Large ribosomal subunit protein bL12 from Wigglesworthia glossinidia brevipalpis.